Here is a 156-residue protein sequence, read N- to C-terminus: ATP synthase subunit b', chloroplastic (156 aa).

The chain crosses the membrane as a helical span at residues 24 to 44; sequence ATLPLVAIQFILLMVTLNIIL.

The protein belongs to the ATPase B chain family. As to quaternary structure, F-type ATPases have 2 components, F(1) - the catalytic core - and F(0) - the membrane proton channel. F(1) has five subunits: alpha(3), beta(3), gamma(1), delta(1), epsilon(1). F(0) has four main subunits: a(1), b(1), b'(1) and c(10-14). The alpha and beta chains form an alternating ring which encloses part of the gamma chain. F(1) is attached to F(0) by a central stalk formed by the gamma and epsilon chains, while a peripheral stalk is formed by the delta, b and b' chains.

The protein resides in the plastid. It localises to the chloroplast thylakoid membrane. Its function is as follows. F(1)F(0) ATP synthase produces ATP from ADP in the presence of a proton or sodium gradient. F-type ATPases consist of two structural domains, F(1) containing the extramembraneous catalytic core and F(0) containing the membrane proton channel, linked together by a central stalk and a peripheral stalk. During catalysis, ATP synthesis in the catalytic domain of F(1) is coupled via a rotary mechanism of the central stalk subunits to proton translocation. Functionally, component of the F(0) channel, it forms part of the peripheral stalk, linking F(1) to F(0). The b'-subunit is a diverged and duplicated form of b found in plants and photosynthetic bacteria. The polypeptide is ATP synthase subunit b', chloroplastic (Thalassiosira pseudonana (Marine diatom)).